The sequence spans 103 residues: Large ribosomal subunit protein uL24 (103 aa).

The protein belongs to the universal ribosomal protein uL24 family. In terms of assembly, part of the 50S ribosomal subunit.

One of two assembly initiator proteins, it binds directly to the 5'-end of the 23S rRNA, where it nucleates assembly of the 50S subunit. In terms of biological role, one of the proteins that surrounds the polypeptide exit tunnel on the outside of the subunit. The chain is Large ribosomal subunit protein uL24 from Sinorhizobium medicae (strain WSM419) (Ensifer medicae).